Reading from the N-terminus, the 184-residue chain is Large ribosomal subunit protein uL5 (184 aa).

This sequence belongs to the universal ribosomal protein uL5 family. Part of the 50S ribosomal subunit; part of the 5S rRNA/L5/L18/L25 subcomplex. Contacts the 5S rRNA and the P site tRNA. Forms a bridge to the 30S subunit in the 70S ribosome.

Its function is as follows. This is one of the proteins that bind and probably mediate the attachment of the 5S RNA into the large ribosomal subunit, where it forms part of the central protuberance. In the 70S ribosome it contacts protein S13 of the 30S subunit (bridge B1b), connecting the 2 subunits; this bridge is implicated in subunit movement. Contacts the P site tRNA; the 5S rRNA and some of its associated proteins might help stabilize positioning of ribosome-bound tRNAs. This is Large ribosomal subunit protein uL5 from Pelagibacter ubique (strain HTCC1062).